A 276-amino-acid polypeptide reads, in one-letter code: NH(3)-dependent NAD(+) synthetase (276 aa).

An ATP-binding site is contributed by 43 to 50; it reads GISGGVDS. D49 contacts Mg(2+). Position 146 (R146) interacts with deamido-NAD(+). T166 serves as a coordination point for ATP. Residue E171 participates in Mg(2+) binding. 2 residues coordinate deamido-NAD(+): K179 and D186. ATP-binding residues include K195 and T217. 266 to 267 serves as a coordination point for deamido-NAD(+); it reads HK.

This sequence belongs to the NAD synthetase family. As to quaternary structure, homodimer.

It carries out the reaction deamido-NAD(+) + NH4(+) + ATP = AMP + diphosphate + NAD(+) + H(+). The protein operates within cofactor biosynthesis; NAD(+) biosynthesis; NAD(+) from deamido-NAD(+) (ammonia route): step 1/1. Its function is as follows. Catalyzes the ATP-dependent amidation of deamido-NAD to form NAD. Uses ammonia as a nitrogen source. This Shewanella amazonensis (strain ATCC BAA-1098 / SB2B) protein is NH(3)-dependent NAD(+) synthetase.